A 708-amino-acid chain; its full sequence is Ion-translocating oxidoreductase complex subunit C (708 aa).

4Fe-4S ferredoxin-type domains follow at residues 369–397 (GEPQEEQSCIRCSACADACPADLLPQQLY) and 407–436 (KATTHNIADCIECGACAWVCPSNIPLVQYF). [4Fe-4S] cluster contacts are provided by cysteine 377, cysteine 380, cysteine 383, cysteine 387, cysteine 416, cysteine 419, cysteine 422, and cysteine 426. Residues 630–682 (AKARKLEQQQANAEPEEQIDPRKAAVEAAIARAKARKLEQQQANAEPEEQIDP) form a disordered region.

The protein belongs to the 4Fe4S bacterial-type ferredoxin family. RnfC subfamily. In terms of assembly, the complex is composed of six subunits: RsxA, RsxB, RsxC, RsxD, RsxE and RsxG. The cofactor is [4Fe-4S] cluster.

It localises to the cell inner membrane. In terms of biological role, part of a membrane-bound complex that couples electron transfer with translocation of ions across the membrane. Required to maintain the reduced state of SoxR. In Escherichia coli O1:K1 / APEC, this protein is Ion-translocating oxidoreductase complex subunit C.